A 480-amino-acid polypeptide reads, in one-letter code: Vinorine hydroxylase (480 aa).

Residues 3–23 (LLQILLAIAGLLAILLLQKQW) traverse the membrane as a helical segment. Cys418 is a binding site for heme.

This sequence belongs to the cytochrome P450 family. Heme serves as cofactor. In terms of tissue distribution, mainly expressed in roots and, to a lesser extent, in leaves.

The protein localises to the membrane. It carries out the reaction vinorine + reduced [NADPH--hemoprotein reductase] + O2 = vomilenine + oxidized [NADPH--hemoprotein reductase] + H2O + H(+). The catalysed reaction is vomilenine = perakine. It participates in alkaloid biosynthesis; ajmaline biosynthesis. Functionally, a cytochrome P450 monooxygenase involved in the biosynthesis of ajmaline-type monoterpenoid indole alkaloids (MIAs) natural products, important plant-derived pharmaceuticals used in the therapy of heart disorders. Catalyzes the hydroxylation of vinorine to vomilenine, an intermediate chemical in the biosynthesis of ajmaline. Supports also vomilenine isomerization to perakine. The sequence is that of Vinorine hydroxylase from Rauvolfia serpentina (Serpentine wood).